The sequence spans 618 residues: Tyrosine-protein kinase ZAP-70 (618 aa).

Residues 10-102 enclose the SH2 1 domain; the sequence is FFYGSISRAE…GLPCNLRKPC (93 aa). The tract at residues 103–162 is interdomain A; it reads NRPPGLEPQPGVFDCLRDAMVRDYVRQTWKLEGDALEQAIISQAPQVEKLIATTAHERMP. Residues 163-254 enclose the SH2 2 domain; the sequence is WYHSSLTREE…GLIYRLKEVC (92 aa). Tyrosine 248 carries the post-translational modification Phosphotyrosine. An interdomain B region spans residues 255 to 336; sequence PNSSASAAVA…KKLFLKRENL (82 aa). The tract at residues 270–320 is disordered; the sequence is AHPSTFTQPQRRVDTLNSDGYTPEPARLASSTDKPRPMPMDTSVYESPYSD. A compositionally biased stretch (polar residues) spans 273 to 289; sequence STFTQPQRRVDTLNSDG. Serine 287 is subject to Phosphoserine. At tyrosine 290 the chain carries Phosphotyrosine. Tyrosine 314 bears the Phosphotyrosine; by LCK mark. Position 318 is a phosphotyrosine (tyrosine 318). Positions 337–597 constitute a Protein kinase domain; sequence LVADIELGCG…VEQRMRNYYY (261 aa). Residues 343 to 351 and lysine 368 contribute to the ATP site; that span reads LGCGNFGSV. The active-site Proton acceptor is aspartate 460. A phosphotyrosine mark is found at tyrosine 491 and tyrosine 492. Residue lysine 543 forms a Glycyl lysine isopeptide (Lys-Gly) (interchain with G-Cter in ubiquitin) linkage.

The protein belongs to the protein kinase superfamily. Tyr protein kinase family. SYK/ZAP-70 subfamily. Interacts with CD247/CD3Z; this interaction docks ZAP70 at the stimulated TCR. Interacts with NFAM1. Interacts with adapter protein SLA; this interaction negatively regulates T-cell receptor signaling. Interacts with VAV1. Interacts with CBL; this interaction promotes ubiquitination, internalization and subsequent degradation of CD247/CD3Z. Identified in a complex with CBL and UBE2L3. Interacts with SHB. Interacts with adapter protein SLA2; this interaction negatively regulates T-cell receptor signaling. Interacts with CBLB. Interacts (via SH2 domains) with RHOH; this interaction regulates ZAP70 subcellular localization. Interacts with DEF6. Interacts (ubiquitinated form) with OTUD7B and UBASH3B. Post-translationally, phosphorylated on tyrosine residues upon T-cell antigen receptor (TCR) stimulation. Phosphorylation of Tyr-314 and Tyr-314 are essential for ZAP70 positive function on T-lymphocyte activation whereas Tyr-290 has a negative regulatory role. Within the C-terminal kinase domain, Tyr-491 and Tyr-492 are phosphorylated after TCR induction, Tyr-491 playing a negative regulatory role and Tyr-492 a positive. Tyr-492 is dephosphorylated by PTN22. Ubiquitinated in response to T cell activation. Deubiquitinated by OTUD7B. As to expression, isoform 1 and isoform 2 are expressed in thymus, spleen and lymph nodes.

The protein resides in the cytoplasm. Its subcellular location is the cell membrane. It carries out the reaction L-tyrosyl-[protein] + ATP = O-phospho-L-tyrosyl-[protein] + ADP + H(+). Its activity is regulated as follows. Activated by phosphorylation at Tyr-492 in the activation loop. Its function is as follows. Tyrosine kinase that plays an essential role in regulation of the adaptive immune response. Regulates motility, adhesion and cytokine expression of mature T-cells, as well as thymocyte development. Also contributes to the development and activation of primary B-lymphocytes. When antigen presenting cells (APC) activate T-cell receptor (TCR), a serie of phosphorylations lead to the recruitment of ZAP70 to the doubly phosphorylated TCR component CD3Z through ITAM motif at the plasma membrane. This recruitment serves to localization to the stimulated TCR and to relieve its autoinhibited conformation. Release of ZAP70 active conformation is further stabilized by phosphorylation mediated by LCK. Subsequently, ZAP70 phosphorylates at least 2 essential adapter proteins: LAT and LCP2. In turn, a large number of signaling molecules are recruited and ultimately lead to lymphokine production, T-cell proliferation and differentiation. Furthermore, ZAP70 controls cytoskeleton modifications, adhesion and mobility of T-lymphocytes, thus ensuring correct delivery of effectors to the APC. ZAP70 is also required for TCR-CD3Z internalization and degradation through interaction with the E3 ubiquitin-protein ligase CBL and adapter proteins SLA and SLA2. Thus, ZAP70 regulates both T-cell activation switch on and switch off by modulating TCR expression at the T-cell surface. During thymocyte development, ZAP70 promotes survival and cell-cycle progression of developing thymocytes before positive selection (when cells are still CD4/CD8 double negative). Additionally, ZAP70-dependent signaling pathway may also contribute to primary B-cells formation and activation through B-cell receptor (BCR). The polypeptide is Tyrosine-protein kinase ZAP-70 (Zap70) (Mus musculus (Mouse)).